The following is a 147-amino-acid chain: Large ribosomal subunit protein uL15 (147 aa).

Residues 1–45 (MTIKLHHLRPAPGAKSDKIRVGRGEGGKRGKTAGRGTKGTKARKN) are disordered. Over residues 15–28 (KSDKIRVGRGEGGK) the composition is skewed to basic and acidic residues.

The protein belongs to the universal ribosomal protein uL15 family. As to quaternary structure, part of the 50S ribosomal subunit.

Functionally, binds to the 23S rRNA. This is Large ribosomal subunit protein uL15 from Rhodococcus jostii (strain RHA1).